We begin with the raw amino-acid sequence, 573 residues long: Splicing factor U2af large subunit A (573 aa).

The disordered stretch occupies residues 1 to 175 (MSEFEDHEGN…KSKQRVSGFD (175 aa)). Residues 22–93 (NGGRDGEIED…ERSRDKDRDH (72 aa)) show a composition bias toward basic and acidic residues. Basic residues predominate over residues 94-105 (RERHHRSSRHRD). The segment covering 106–141 (HSRERGERRERGGRDDDDYRRSRDRDHDRRRDDRGG) has biased composition (basic and acidic residues). The segment covering 159–169 (TRSRSPSKSKQ) has biased composition (basic residues). 3 RRM domains span residues 239 to 322 (RRVY…RPSD), 359 to 437 (DRIF…RANQ), and 478 to 564 (QVVT…YPED).

The protein belongs to the splicing factor SR family. As to quaternary structure, component of the spliceosome. Interacts with SUA. Interacts with SF1 in the nucleus.

It localises to the nucleus. Its function is as follows. Necessary for the splicing of pre-mRNA. The chain is Splicing factor U2af large subunit A from Arabidopsis thaliana (Mouse-ear cress).